A 549-amino-acid chain; its full sequence is Cytoplasmic trehalase (549 aa).

Substrate-binding positions include Arg-168, 175–176 (WD), Asn-212, 221–223 (RSQ), 292–294 (RDE), and Gly-324. Active-site proton donor/acceptor residues include Asp-326 and Glu-509. A substrate-binding site is contributed by Glu-525.

The protein belongs to the glycosyl hydrolase 37 family. Monomer.

The protein localises to the cytoplasm. It carries out the reaction alpha,alpha-trehalose + H2O = alpha-D-glucose + beta-D-glucose. Its pathway is glycan degradation; trehalose degradation; D-glucose from alpha,alpha-trehalose: step 1/1. Hydrolyzes trehalose to glucose. Could be involved, in cells returning to low osmolarity conditions, in the utilization of the accumulated cytoplasmic trehalose, which was synthesized in response to high osmolarity. In Salmonella schwarzengrund (strain CVM19633), this protein is Cytoplasmic trehalase.